A 115-amino-acid chain; its full sequence is U3-lycotoxin-Ls1l (115 aa).

The N-terminal stretch at 1–20 is a signal peptide; it reads MKFVLLFGVLLVTLFSYSSA. Positions 21–44 are excised as a propeptide; sequence EMLDDFDQADEDELLSLIEKEEAR. 3 cysteine pairs are disulfide-bonded: cysteine 55/cysteine 72, cysteine 62/cysteine 87, and cysteine 74/cysteine 85.

Belongs to the neurotoxin 19 (CSTX) family. 01 subfamily. In terms of tissue distribution, expressed by the venom gland.

The protein resides in the secreted. This is U3-lycotoxin-Ls1l from Lycosa singoriensis (Wolf spider).